The primary structure comprises 614 residues: Zinc metalloproteinase-disintegrin-like protein H4 subunit A (614 aa).

Residues 1 to 20 form the signal peptide; that stretch reads MIQPLLVVTCLVVFPYQVSS. Positions 21-193 are excised as a propeptide; the sequence is IILESGNVND…RKASQLVATS (173 aa). Pyrrolidone carboxylic acid (Glu) is present on Glu194. One can recognise a Peptidase M12B domain in the interval 201–397; that stretch reads KYIELVIVVD…IKSKCIDNKP (197 aa). Residue Asn220 is glycosylated (N-linked (GlcNAc...) asparagine). 17 disulfide bridges follow: Cys312/Cys392, Cys352/Cys376, Cys354/Cys359, Cys408/Cys437, Cys419/Cys432, Cys421/Cys427, Cys431/Cys454, Cys445/Cys451, Cys450/Cys476, Cys463/Cys483, Cys470/Cys502, Cys495/Cys507, Cys514/Cys564, Cys529/Cys575, Cys542/Cys552, Cys559/Cys601, and Cys595/Cys607. His337 contacts Zn(2+). Residues 337–348 carry the Metal-binding motif; sequence HELGHNLGMDHD. The Proton acceptor role is filled by Glu338. Zn(2+) contacts are provided by His341 and His347. In terms of domain architecture, Disintegrin spans 405 to 491; sequence PAFCGNYFVE…ECPTDVLQRN (87 aa). Asn410, Phe412, Glu414, Glu417, and Asp420 together coordinate Ca(2+). Asn433 carries N-linked (GlcNAc...) asparagine glycosylation. The short motif at 469 to 471 is the D/ECD-tripeptide element; that stretch reads ECD. Residues Asp471 and Asp486 each contribute to the Ca(2+) site.

The protein belongs to the venom metalloproteinase (M12B) family. P-III subfamily. As to quaternary structure, homodimer; disulfide-linked. Heterodimer of A and B subunits; disulfide-linked. The cofactor is Zn(2+). Post-translationally, N-glycosylated. In terms of processing, the N-terminus is blocked. In terms of tissue distribution, expressed by the venom gland (at protein level). Expressed by the venom gland.

The protein resides in the secreted. The proteolytic activity of the heterodimer of A and B subunits requires Zn(2+) and Ca(2+) ions. Functionally, heterodimer (A and B subunits): Zinc metalloprotease that has fibrinogenolytic and hemorrhagic activities. Cleaves insulin B chain preferably at '40-Tyr-|-Leu-41' bond, but also at '28-Gln-|-His-29' and '34-His-|-Leu-35' bonds. Hydrolyzes effectively isolated extracellular matrix (ECM) bovine fibronectin, and only slightly, basal membrane (BM) proteins human collagen IV and murine laminin, in vitro. Cleaves nidogen-1 (at '350-Ser-|-Phe-351' and '380-Tyr-|-Asn-381' bonds), but not laminin, in a solubilized BM preparation. Hydrolyzes plasma proteins involved in blood coagulation in vitro. It slightly shortens prothrombin time and significantly prolongs thrombin time. Has potent alpha-fibrinogenase activity cleaving human fibrinogen alpha chain at '441-Glu-|-Leu-442' and '539-Glu-|-Phe-540' bonds, and to a lesser extent, beta chain at '52-Lys-|-Arg-53' and '48-Pro-|-Leu-49' bonds, but does not cleave gamma chain. Hydrolyzes bovine prothrombin at '200-Ser-|-Gly-201' bond, but does not activate it, however, it cleaves fragment 1 and prethrombin 1 from it. Hydrolyzes bovine factor X heavy chain, but the cleavage does not produce an activated factor Xa heavy chain. No hydrolysis or activation of plasminogen. The ability to degrade some of the ECM, BM and plasma proteins is likely the main contributor to its hemorrhagic activity. Inhibits platelet aggregation induced by collagen in vitro. Its binding to glycosaminoglycans (GAGs) may assist in concentrating it in the proximity of blood vessel walls enabling in vivo degradation of BM protein components. Cytotoxic to cultured HeLa cancer cells in a concentration- and time-dependent manner. In the solubilized BM preparation (Matrigel), it induces morphological changes in the HeLa cells and inhibits their adhesion, however, the viability of the cells is not reduced. In Vipera ammodytes ammodytes (Western sand viper), this protein is Zinc metalloproteinase-disintegrin-like protein H4 subunit A.